A 506-amino-acid chain; its full sequence is Gallate 1-beta-glucosyltransferase 84A23 (506 aa).

The active-site Proton acceptor is the histidine 20. Histidine 20 is a binding site for an anthocyanidin. Positions 345, 360, 363, 364, 365, and 368 each coordinate UDP-alpha-D-glucose. Glycine 383 contacts an anthocyanidin. UDP-alpha-D-glucose contacts are provided by aspartate 384 and glutamine 385.

This sequence belongs to the UDP-glycosyltransferase family. As to expression, expressed in roots of the seedlings.

It is found in the cytoplasm. The enzyme catalyses 3,4,5-trihydroxybenzoate + UDP-alpha-D-glucose = 1-O-galloyl-beta-D-glucose + UDP. The catalysed reaction is 3,4-dihydroxybenzoate + UDP-alpha-D-glucose = 1-O-(3,4-dihydroxy-benzoyl)-beta-D-glucose + UDP. It catalyses the reaction 4-hydroxybenzoate + UDP-alpha-D-glucose = 4-(beta-D-glucosyloxy)benzoate + UDP + H(+). It carries out the reaction (E)-cinnamate + UDP-alpha-D-glucose = 1-O-(trans-cinnamoyl)-beta-D-glucose + UDP. The enzyme catalyses (E)-sinapate + UDP-alpha-D-glucose = 1-O-(trans-sinapoyl)-beta-D-glucose + UDP. The catalysed reaction is (E)-4-coumarate + UDP-alpha-D-glucose = 1-O-(trans-4-coumaroyl)-beta-D-glucose + UDP. It catalyses the reaction (E)-caffeate + UDP-alpha-D-glucose = 1-O-[(E)-caffeoyl]-beta-D-glucose + UDP. It carries out the reaction (E)-ferulate + UDP-alpha-D-glucose = 1-O-[(E)-feruloyl]-beta-D-glucose + UDP. The enzyme catalyses genistein + UDP-alpha-D-glucose = genistein 7-O-beta-D-glucoside + UDP + H(+). The catalysed reaction is apigenin + UDP-alpha-D-glucose = apigenin 7-O-beta-D-glucoside + UDP + H(+). It catalyses the reaction luteolin + UDP-alpha-D-glucose = luteolin 7-O-beta-D-glucoside + UDP + H(+). Functionally, glucosyltransferase that catalyzes the formation of 1-O-beta-D-glucose esters with hydroxybenzoic acids and cinnamic acid including its derivatives as preferred glucosyl acceptors. Has significant activity with gallic acid (3,4,5-trihydroxybenzoic acid), 3,4-dihydroxybenzoic acid, 4-hydroxybenzoic acid, cinnamic acid, sinapic acid, coumaric acid, caffeic acid and ferulic acid in vitro. Gallic acid is the predicted native substrate of the enzyme, which thus catalyzes the formation of 1-O-galloyl-beta-D-glucose, the first committed step of hydrolyzable tannins (HTs) biosynthesis, with punicalagin isomers being the major HTs of pomegranate. Catalyzes the formation of flavonoid glucosides with genistein, apigenin and luteolin in vitro. Has low activity with benzoic acid, 2-hydroxybenzoic acid, 3-hydroxybenzoic acid, 2,4-dihydroxybenzoic acid, naringenin and quercetin. No activity with catechol, resveratrol, chlorogenic acid, catechin and epicatechin (building blocks of proanthocyanidins) or cyanidin, delphinidin and pelargonidin (the three anthocyanidins). This Punica granatum (Pomegranate) protein is Gallate 1-beta-glucosyltransferase 84A23.